The following is a 146-amino-acid chain: MSTFNAETADNLEDIEKQFAVVAVEQAETYWKLLTSVPGSKLRLTKFDDEIYENFMERFPEYKDVERVKKFTEEELKTKEAKERWRKFFTIFEKKIEDYNFGTLLRTDASAEYGQFTTCFVVRLQFYAFEIARNKHGLNDWIVGQK.

This sequence belongs to the PBDC1 family.

Its subcellular location is the cytoplasm. This chain is Protein PBDC1 homolog, found in Saccharomyces cerevisiae (strain ATCC 204508 / S288c) (Baker's yeast).